The primary structure comprises 695 residues: Variediene synthase (695 aa).

The interval 1–23 (MVPTSLSPDDTSDPVPRSSSDIQ) is disordered. Positions 7 to 332 (SPDDTSDPVP…PRYHPWLCEE (326 aa)) are terpene cyclase. Aspartate 98 is a Mg(2+) binding site. Substrate-binding positions include aspartate 98, 184 to 187 (RIID), asparagine 228, 232 to 236 (SFDIE), and 324 to 325 (RY). Residues 98-102 (DNVVE) carry the DDXXD 1 motif. The NSE/DTE motif lies at 228–236 (NDYFSFDIE). Residues 353–392 (RRSISGDSISSESSVWSGASDRSARSSVSSAPSLDEGKEP) are disordered. Residues 357-385 (SGDSISSESSVWSGASDRSARSSVSSAPS) are compositionally biased toward low complexity. 3 residues coordinate isopentenyl diphosphate: lysine 415, arginine 418, and histidine 447. 2 residues coordinate Mg(2+): aspartate 454 and aspartate 458. The DDXXD 2 signature appears at 454 to 458 (DDIED). Residue arginine 463 participates in dimethylallyl diphosphate binding. Arginine 464 lines the isopentenyl diphosphate pocket. Positions 541, 542, 579, 586, 595, and 605 each coordinate dimethylallyl diphosphate.

In the N-terminal section; belongs to the terpene synthase family. This sequence in the C-terminal section; belongs to the FPP/GGPP synthase family. In terms of assembly, hexamer. It depends on Mg(2+) as a cofactor.

It catalyses the reaction isopentenyl diphosphate + (2E,6E)-farnesyl diphosphate = (2E,6E,10E)-geranylgeranyl diphosphate + diphosphate. The catalysed reaction is (2E,6E,10E)-geranylgeranyl diphosphate = variediene + diphosphate. It participates in secondary metabolite biosynthesis; terpenoid biosynthesis. Its function is as follows. Bifunctional terpene synthase converts DMAPP and IPP, and also GGPP, into variediene as a single product. The C-terminal prenyltransferase domain of AbVS catalyzes formation of GGPP, whereas the N-terminal terpene cyclase domain catalyzes the cyclization of GGPP to variediene. The protein is Variediene synthase of Aspergillus brasiliensis (strain CBS 101740 / IMI 381727 / IBT 21946).